A 426-amino-acid polypeptide reads, in one-letter code: Glutamate-1-semialdehyde 2,1-aminomutase (426 aa).

An N6-(pyridoxal phosphate)lysine modification is found at lysine 265.

Belongs to the class-III pyridoxal-phosphate-dependent aminotransferase family. HemL subfamily. Homodimer. Pyridoxal 5'-phosphate is required as a cofactor.

The protein localises to the cytoplasm. The catalysed reaction is (S)-4-amino-5-oxopentanoate = 5-aminolevulinate. It functions in the pathway porphyrin-containing compound metabolism; protoporphyrin-IX biosynthesis; 5-aminolevulinate from L-glutamyl-tRNA(Glu): step 2/2. The polypeptide is Glutamate-1-semialdehyde 2,1-aminomutase (Sodalis glossinidius (strain morsitans)).